The sequence spans 558 residues: Alkaline/neutral invertase CINV2 (558 aa).

Phosphoserine occurs at positions 16, 19, and 50. Threonine 79 carries the phosphothreonine modification. The residue at position 555 (serine 555) is a Phosphoserine.

The protein belongs to the glycosyl hydrolase 100 family.

It localises to the cytoplasm. Its subcellular location is the cytosol. The enzyme catalyses Hydrolysis of terminal non-reducing beta-D-fructofuranoside residues in beta-D-fructofuranosides.. Cytosolic invertase that may cleave sucrose into glucose and fructose, and that is involved in the regulation of root growth. May regulate sugar-mediated root development by controlling sucrose catabolism in root cells. The sequence is that of Alkaline/neutral invertase CINV2 from Arabidopsis thaliana (Mouse-ear cress).